An 854-amino-acid polypeptide reads, in one-letter code: Periodic tryptophan protein 2 homolog (854 aa).

13 WD repeats span residues 9-52, 53-93, 94-132, 144-183, 188-227, 252-291, 294-334, 337-376, 379-418, 422-464, 465-504, 507-546, and 569-608; these read NLVG…TFPF, ENHK…LHYF, NFKS…EERE, GHFD…GFHP, GHKN…QAGE, NQNS…MLYQ, ITQS…YVLK, SHYD…CIVT, QHTS…NFRT, PSRV…ETLA, GHEG…GIVE, PIPS…QTSL, and SLNK…LIKK. At T640 the chain carries Phosphothreonine. S645 carries the phosphoserine modification. Residues 668–709 form a WD 14 repeat; that stretch reads TRPEIICHGVQFSPSGGAFAAATTEGLMIYSLYNDFLFDPIN.

The protein belongs to the WD repeat PWP2 family.

The chain is Periodic tryptophan protein 2 homolog from Schizosaccharomyces pombe (strain 972 / ATCC 24843) (Fission yeast).